A 204-amino-acid polypeptide reads, in one-letter code: Large ribosomal subunit protein eL15 (204 aa).

Belongs to the eukaryotic ribosomal protein eL15 family. Component of the large ribosomal subunit.

The protein localises to the cytoplasm. Functionally, component of the large ribosomal subunit. The ribosome is a large ribonucleoprotein complex responsible for the synthesis of proteins in the cell. This chain is Large ribosomal subunit protein eL15 (rpl15), found in Cyprinus carpio (Common carp).